We begin with the raw amino-acid sequence, 637 residues long: tRNA uridine 5-carboxymethylaminomethyl modification enzyme MnmG (637 aa).

FAD-binding positions include 15–20 (GAGHAG), Val127, and Ser182. 274–288 (GPRYCPSIEDKVVRF) serves as a coordination point for NAD(+). Gln371 serves as a coordination point for FAD.

Belongs to the MnmG family. Homodimer. Heterotetramer of two MnmE and two MnmG subunits. It depends on FAD as a cofactor.

The protein localises to the cytoplasm. NAD-binding protein involved in the addition of a carboxymethylaminomethyl (cmnm) group at the wobble position (U34) of certain tRNAs, forming tRNA-cmnm(5)s(2)U34. The polypeptide is tRNA uridine 5-carboxymethylaminomethyl modification enzyme MnmG (Heliobacterium modesticaldum (strain ATCC 51547 / Ice1)).